A 123-amino-acid polypeptide reads, in one-letter code: MATINQLVRKPRKRMVDKSDVPALQNCPQRRGVCTRVYTTTPKKPNSALRKVCRVRLTNGFEVSSYIGGEGHNLQEHSVVLIRGGRVKDLPGVRYHTVRGSLDTSGVKDRKQGRSKYGAKRPK.

D89 is subject to 3-methylthioaspartic acid. Residues 100–123 form a disordered region; sequence GSLDTSGVKDRKQGRSKYGAKRPK. Residues 113 to 123 are compositionally biased toward basic residues; that stretch reads GRSKYGAKRPK.

The protein belongs to the universal ribosomal protein uS12 family. As to quaternary structure, part of the 30S ribosomal subunit. Contacts proteins S8 and S17. May interact with IF1 in the 30S initiation complex.

With S4 and S5 plays an important role in translational accuracy. Its function is as follows. Interacts with and stabilizes bases of the 16S rRNA that are involved in tRNA selection in the A site and with the mRNA backbone. Located at the interface of the 30S and 50S subunits, it traverses the body of the 30S subunit contacting proteins on the other side and probably holding the rRNA structure together. The combined cluster of proteins S8, S12 and S17 appears to hold together the shoulder and platform of the 30S subunit. In Pseudomonas aeruginosa (strain LESB58), this protein is Small ribosomal subunit protein uS12.